A 353-amino-acid chain; its full sequence is Photosystem II D2 protein (353 aa).

Position 2 is an N-acetylthreonine (T2). A Phosphothreonine modification is found at T2. The helical transmembrane segment at 41-61 (CAYFALGGWFTGTTFVTSWYT) threads the bilayer. H118 is a chlorophyll a binding site. A helical transmembrane segment spans residues 125 to 141 (GFMLRQFELARSVQLRP). Pheophytin a contacts are provided by Q130 and N143. Residues 153–166 (VFVSVFLIYPLGQS) traverse the membrane as a helical segment. H198 contacts chlorophyll a. Residues 208–228 (AALLCAIHGATVENTLFEDGD) traverse the membrane as a helical segment. A plastoquinone is bound by residues H215 and F262. Residue H215 coordinates Fe cation. H269 provides a ligand contact to Fe cation. The helical transmembrane segment at 279 to 295 (GLWMSALGVVGLALNLR) threads the bilayer.

This sequence belongs to the reaction center PufL/M/PsbA/D family. As to quaternary structure, PSII is composed of 1 copy each of membrane proteins PsbA, PsbB, PsbC, PsbD, PsbE, PsbF, PsbH, PsbI, PsbJ, PsbK, PsbL, PsbM, PsbT, PsbX, PsbY, PsbZ, Psb30/Ycf12, at least 3 peripheral proteins of the oxygen-evolving complex and a large number of cofactors. It forms dimeric complexes. The cofactor is The D1/D2 heterodimer binds P680, chlorophylls that are the primary electron donor of PSII, and subsequent electron acceptors. It shares a non-heme iron and each subunit binds pheophytin, quinone, additional chlorophylls, carotenoids and lipids. There is also a Cl(-1) ion associated with D1 and D2, which is required for oxygen evolution. The PSII complex binds additional chlorophylls, carotenoids and specific lipids..

The protein localises to the plastid. The protein resides in the chloroplast thylakoid membrane. It catalyses the reaction 2 a plastoquinone + 4 hnu + 2 H2O = 2 a plastoquinol + O2. Its function is as follows. Photosystem II (PSII) is a light-driven water:plastoquinone oxidoreductase that uses light energy to abstract electrons from H(2)O, generating O(2) and a proton gradient subsequently used for ATP formation. It consists of a core antenna complex that captures photons, and an electron transfer chain that converts photonic excitation into a charge separation. The D1/D2 (PsbA/PsbD) reaction center heterodimer binds P680, the primary electron donor of PSII as well as several subsequent electron acceptors. D2 is needed for assembly of a stable PSII complex. The chain is Photosystem II D2 protein from Dioscorea elephantipes (Elephant's foot yam).